The primary structure comprises 44 residues: Photosystem I reaction center subunit IX 2 (44 aa).

Residues 13–35 form a helical membrane-spanning segment; that stretch reads APVLATLWLSSTAVILIGVNSYF.

The protein belongs to the PsaJ family.

It localises to the cellular thylakoid membrane. Its function is as follows. May help in the organization of the PsaE and PsaF subunits. The polypeptide is Photosystem I reaction center subunit IX 2 (psaJ2) (Prochlorococcus marinus (strain NATL2A)).